The following is an 875-amino-acid chain: Protein SEY1 (875 aa).

Residues Met-1–Gln-749 are Cytoplasmic-facing. The 259-residue stretch at Gly-49–Ala-307 folds into the GB1/RHD3-type G domain. Gly-59 to Ser-66 contacts GTP. Residues Ser-482–Glu-506 adopt a coiled-coil conformation. The interval Leu-676–Asp-704 is disordered. A compositionally biased stretch (acidic residues) spans Ala-690–Asp-704. The chain crosses the membrane as a helical span at residues Val-750–Leu-770. Topologically, residues Arg-771–Pro-773 are lumenal. Residues Ala-774–Leu-794 form a helical membrane-spanning segment. Residues Trp-795–Phe-875 are Cytoplasmic-facing. Positions Met-831–Phe-875 are disordered. The span at Ala-839–Asp-864 shows a compositional bias: basic and acidic residues. The span at Val-865–Phe-875 shows a compositional bias: acidic residues.

The protein belongs to the TRAFAC class dynamin-like GTPase superfamily. GB1/RHD3 GTPase family. RHD3 subfamily.

Its subcellular location is the endoplasmic reticulum membrane. In terms of biological role, cooperates with the reticulon proteins and tubule-shaping DP1 family proteins to generate and maintain the structure of the tubular endoplasmic reticulum network. Has GTPase activity, which is required for its function in ER organization. The protein is Protein SEY1 of Ajellomyces dermatitidis (strain ER-3 / ATCC MYA-2586) (Blastomyces dermatitidis).